The chain runs to 269 residues: Diphthine synthase (269 aa).

S-adenosyl-L-methionine-binding positions include leucine 10, aspartate 87, valine 90, 115 to 116, leucine 166, alanine 209, and histidine 234; that span reads SI.

This sequence belongs to the diphthine synthase family. Homodimer.

The catalysed reaction is 2-[(3S)-amino-3-carboxypropyl]-L-histidyl-[translation elongation factor 2] + 3 S-adenosyl-L-methionine = diphthine-[translation elongation factor 2] + 3 S-adenosyl-L-homocysteine + 3 H(+). It participates in protein modification; peptidyl-diphthamide biosynthesis. In terms of biological role, S-adenosyl-L-methionine-dependent methyltransferase that catalyzes the trimethylation of the amino group of the modified target histidine residue in translation elongation factor 2 (EF-2), to form an intermediate called diphthine. The three successive methylation reactions represent the second step of diphthamide biosynthesis. The sequence is that of Diphthine synthase from Pyrococcus furiosus (strain ATCC 43587 / DSM 3638 / JCM 8422 / Vc1).